Reading from the N-terminus, the 558-residue chain is Xylulose kinase 2 (558 aa).

Residues Asp16, 20–23 (QSMK), Ser111, and Asp283 each bind substrate. ATP contacts are provided by residues Thr305 and 456-460 (GASAN).

The protein belongs to the FGGY kinase family. Requires a divalent metal cation as cofactor.

The protein resides in the cytoplasm. The enzyme catalyses D-xylulose + ATP = D-xylulose 5-phosphate + ADP + H(+). The protein operates within isoprenoid biosynthesis; carotenoid biosynthesis. Repressed by oxo-clomazone (keto-clomazone), a bleaching herbicide. Mediates 1-deoxy-D-xylulose (DX) phosphorylation in the cytoplasm prior to the translocation of 1-deoxy-D-xylulose 5-phosphate into plastids. Can also phosphorylate D-xylulose (Xyl). Uses preferentially ATP as cosubstrate. This chain is Xylulose kinase 2, found in Arabidopsis thaliana (Mouse-ear cress).